Consider the following 1413-residue polypeptide: DNA-directed RNA polymerase subunit beta' (1413 aa).

Cys70, Cys72, Cys85, and Cys88 together coordinate Zn(2+). Mg(2+) contacts are provided by Asp461, Asp463, and Asp465. Zn(2+)-binding residues include Cys820, Cys894, Cys901, and Cys904.

It belongs to the RNA polymerase beta' chain family. The RNAP catalytic core consists of 2 alpha, 1 beta, 1 beta' and 1 omega subunit. When a sigma factor is associated with the core the holoenzyme is formed, which can initiate transcription. The cofactor is Mg(2+). It depends on Zn(2+) as a cofactor.

The enzyme catalyses RNA(n) + a ribonucleoside 5'-triphosphate = RNA(n+1) + diphosphate. DNA-dependent RNA polymerase catalyzes the transcription of DNA into RNA using the four ribonucleoside triphosphates as substrates. In Cupriavidus metallidurans (strain ATCC 43123 / DSM 2839 / NBRC 102507 / CH34) (Ralstonia metallidurans), this protein is DNA-directed RNA polymerase subunit beta'.